The primary structure comprises 103 residues: MYAVIKTGGKQYRVAAGEKIKVEQIAAEVGQEIVIDQVLAVGNGAELKVGTPLVSGATVKATVVAHGKHDKVRIFKLRRRKHYQKRQGHRQQFTELQIQAIAA.

The protein belongs to the bacterial ribosomal protein bL21 family. Part of the 50S ribosomal subunit. Contacts protein L20.

Functionally, this protein binds to 23S rRNA in the presence of protein L20. In Acidovorax sp. (strain JS42), this protein is Large ribosomal subunit protein bL21.